The sequence spans 667 residues: Flavin-dependent halogenase malA (667 aa).

Residues histidine 48, glutamate 70, isoleucine 79, and serine 82 each coordinate FAD. Lysine 108 is an active-site residue. Residues arginine 144, valine 168, aspartate 399, and isoleucine 412 each contribute to the FAD site. Glutamate 494 is a binding site for substrate. Residues cysteine 597, cysteine 600, cysteine 613, and cysteine 616 each contribute to the Zn(2+) site. The flexible region stretch occupies residues threonine 621–asparagine 646.

Belongs to the flavin-dependent halogenase family. The cofactor is Zn(2+).

The enzyme catalyses (+)-premalbrancheamide + 2 FAD + 2 chloride + 4 H(+) = (+)-malbrancheamide + 2 FADH2. It carries out the reaction (+)-premalbrancheamide + FAD + chloride + 2 H(+) = (+)-malbrancheamide B + FADH2. It catalyses the reaction (+)-premalbrancheamide + FAD + chloride + 2 H(+) = (+)-isomalbrancheamide B + FADH2. The catalysed reaction is (+)-malbrancheamide B + FAD + chloride + 2 H(+) = (+)-malbrancheamide + FADH2. The enzyme catalyses (+)-isomalbrancheamide B + FAD + chloride + 2 H(+) = (+)-malbrancheamide + FADH2. It carries out the reaction (+)-premalbrancheamide + bromide + FAD + 2 H(+) = (+)-malbrancheamide C + FADH2. It catalyses the reaction (+)-premalbrancheamide + bromide + FAD + 2 H(+) = (+)-isomalbrancheamide C + FADH2. The catalysed reaction is (+)-malbrancheamide B + bromide + FAD + 2 H(+) = (+)-malbrancheamide D + FADH2. The enzyme catalyses (+)-isomalbrancheamide B + bromide + FAD + 2 H(+) = (+)-isomalbrancheamide D + FADH2. Its pathway is alkaloid biosynthesis. Functionally, flavin-dependent halogenase; part of the gene cluster that mediates the biosynthesis of malbrancheamide, a dichlorinated fungal indole alkaloid that belongs to a family of natural products containing a characteristic bicyclo[2.2.2]diazaoctane core. The first step of malbrancheamide biosynthesis involves coupling of L-proline and L-tryptophan by malG, a bimodular NRPS, to produce L-Pro-L-Trp aldehyde through reductive offloading. This compound undergoes spontaneous cyclization and dehydration to give a dienamine which is reverse prenylated at C-2 by malE. The other prenyltransferase present in the cluster, malB, displays modest activity, suggesting that may be a redundant gene in the pathway. Subsequently, a [4+2] Diels-Alder cyclo-addition catalyzed by the bifunctional enzyme malC forms the characteristic bicyclo[2.2.2]diazaoctane ring of premalbrancheamid. Finally, the flavin-dependent halogenase malA catalyzes the iterative dichlorination of the indole ring of premalbrancheamide to yield C-9 monochlorinated malbrancheamide B, C-8 monochlorinated isomalbrancheamide B, and dichlorinated malbrancheamide. MalA is also able to brominate premalbrancheamide at C-9 to yield malbrancheamide C, and, to a lesser extend, at C-8 to yield isomalbrancheamide C. Finally, malA can brominate C-9 monochlorinated malbrancheamide B at C-8 to yield malbrancheamide D, or C-8 monochlorinated isomalbrancheamide B at C-9 to produce isomalbrancheamide D. This chain is Flavin-dependent halogenase malA, found in Malbranchea aurantiaca.